The chain runs to 594 residues: Probable glucose transporter rco-3 (594 aa).

The Cytoplasmic segment spans residues 1–13 (MAIFAMGWQKPDN). Residues 14–34 (VAGSSAPAIMVGLFVATGGLL) form a helical membrane-spanning segment. The Extracellular portion of the chain corresponds to 35 to 73 (LGYDTGTINGILAMKSFKDHFSTGYIDGNGQPGIYPKES). A helical membrane pass occupies residues 74–94 (ALIVAMLSAGTAIGALLAAPL). Residues 95 to 103 (GDHYGRRRS) are Cytoplasmic-facing. The helical transmembrane segment at 104-124 (LIGAIGIFVIGAILQVCAYNI) threads the bilayer. A topological domain (extracellular) is located at residue aspartate 125. A helical membrane pass occupies residues 126-146 (LLVAGRTVAGVGIGIVSVLVP). At 147–159 (LYQSEMAPKWIRG) the chain is on the cytoplasmic side. The helical transmembrane segment at 160–180 (TLVCTYQLSITMGLLAAAVVN) threads the bilayer. Residues 181 to 193 (ILTYKLKTAAAYR) are Extracellular-facing. A helical membrane pass occupies residues 194–214 (VPIGLQLTWACVLALGLTVLP). Residues 215–293 (ETPRYLIKRG…TGCCLQMLQQ (79 aa)) lie on the Cytoplasmic side of the membrane. The chain crosses the membrane as a helical span at residues 294 to 314 (LTGVNFIMYYGTTFFNNAGVG). The Extracellular portion of the chain corresponds to 315–318 (NPFK). A helical membrane pass occupies residues 319–339 (ISLIMQVINTASTIPGLFVVE). Over 340–345 (SWGRRR) the chain is Cytoplasmic. A helical membrane pass occupies residues 346 to 366 (LLMVGAIGMAICQLLIAAFAT). The Extracellular segment spans residues 367 to 378 (ASGSNNLSAQNK). Residue asparagine 372 is glycosylated (N-linked (GlcNAc...) asparagine). The chain crosses the membrane as a helical span at residues 379 to 403 (VLITFVAIYIFFFAASWGPVVWVVT). Over 404 to 415 (SEIYPLKVRAKS) the chain is Cytoplasmic. The helical transmembrane segment at 416-436 (MSITTASNWFLNFGIAYGTPY) threads the bilayer. Residues 437-454 (MQTNSAASDESSIDLGSK) lie on the Extracellular side of the membrane. The chain crosses the membrane as a helical span at residues 455–475 (VFFVWGAFCIVAVGFVWCMVY). Residues 476 to 594 (ETSKISLEQI…ASLGNIDLSY (119 aa)) are Cytoplasmic-facing. The disordered stretch occupies residues 512 to 594 (DLGFSDGGIP…ASLGNIDLSY (83 aa)). Over residues 524–576 (QQLQQQPQQPQQQQQQHHQQQQHQLQVDLQQSQSRTSNSSTSQTDTGGSNNTG) the composition is skewed to low complexity.

It belongs to the major facilitator superfamily. Sugar transporter (TC 2.A.1.1) family.

Its subcellular location is the membrane. Functionally, probable glucose transporter. Involved in sugar transport, carbon catabolite repression, and initiation of conidiophore development. The polypeptide is Probable glucose transporter rco-3 (rco-3) (Neurospora crassa (strain ATCC 24698 / 74-OR23-1A / CBS 708.71 / DSM 1257 / FGSC 987)).